The chain runs to 318 residues: Isoflavone reductase (318 aa).

NADP(+) contacts are provided by residues 11–17, R36, and K44; that span reads GPTGAIG. The active-site Proton acceptor is K144. R148 contributes to the NADP(+) binding site.

It belongs to the NmrA-type oxidoreductase family. Isoflavone reductase subfamily.

It catalyses the reaction (3R)-vestitone + NADP(+) = 2'-hydroxyformononetin + NADPH + 2 H(+). The protein operates within phytoalexin biosynthesis; pterocarpan phytoalexin biosynthesis. Functionally, reduces achiral isoflavones to chiral isoflavanones during the biosynthesis of chiral pterocarpan phytoalexins. The reduction product is a third isomer, which represents the penultimate intermediate in the synthesis of the phytoalexin (-)-medicarpin, the major phytoalexin in Alfalfa. This is Isoflavone reductase from Medicago sativa (Alfalfa).